A 615-amino-acid polypeptide reads, in one-letter code: Dihydroxy-acid dehydratase (615 aa).

Asp81 serves as a coordination point for Mg(2+). Cys122 contributes to the [2Fe-2S] cluster binding site. 2 residues coordinate Mg(2+): Asp123 and Lys124. Lys124 carries the N6-carboxylysine modification. Cys195 is a binding site for [2Fe-2S] cluster. Glu491 lines the Mg(2+) pocket. The Proton acceptor role is filled by Ser517.

The protein belongs to the IlvD/Edd family. Homodimer. [2Fe-2S] cluster is required as a cofactor. Requires Mg(2+) as cofactor.

The catalysed reaction is (2R)-2,3-dihydroxy-3-methylbutanoate = 3-methyl-2-oxobutanoate + H2O. It carries out the reaction (2R,3R)-2,3-dihydroxy-3-methylpentanoate = (S)-3-methyl-2-oxopentanoate + H2O. The protein operates within amino-acid biosynthesis; L-isoleucine biosynthesis; L-isoleucine from 2-oxobutanoate: step 3/4. It functions in the pathway amino-acid biosynthesis; L-valine biosynthesis; L-valine from pyruvate: step 3/4. Functionally, functions in the biosynthesis of branched-chain amino acids. Catalyzes the dehydration of (2R,3R)-2,3-dihydroxy-3-methylpentanoate (2,3-dihydroxy-3-methylvalerate) into 2-oxo-3-methylpentanoate (2-oxo-3-methylvalerate) and of (2R)-2,3-dihydroxy-3-methylbutanoate (2,3-dihydroxyisovalerate) into 2-oxo-3-methylbutanoate (2-oxoisovalerate), the penultimate precursor to L-isoleucine and L-valine, respectively. This Shewanella pealeana (strain ATCC 700345 / ANG-SQ1) protein is Dihydroxy-acid dehydratase.